A 472-amino-acid polypeptide reads, in one-letter code: Inhibitor of Apoptosis OPG037 (472 aa).

ANK repeat units follow at residues 97 to 126, 130 to 161, 233 to 263, 267 to 297, 322 to 351, and 353 to 377; these read DGNY…DPNA, HNKT…KINN, DGNT…DVNK, FGDS…VITD, YDST…ICED, and MYYA…SVDF.

The protein belongs to the orthopoxvirus OPG037 protein family. May interact with host caspase-9-Apaf-1 complex.

The protein resides in the host cytoplasm. Functionally, inhibits host apoptosis. Acts by associating with host apoptosome. The chain is Inhibitor of Apoptosis OPG037 (OPG037) from Vaccinia virus (strain Western Reserve) (VACV).